The sequence spans 346 residues: tRNA N6-adenosine threonylcarbamoyltransferase (346 aa).

Fe cation contacts are provided by H111 and H115. Residues 134-138, D167, G180, and N279 each bind substrate; that span reads LVSGG. Residue D307 participates in Fe cation binding.

This sequence belongs to the KAE1 / TsaD family. Fe(2+) serves as cofactor.

Its subcellular location is the cytoplasm. The catalysed reaction is L-threonylcarbamoyladenylate + adenosine(37) in tRNA = N(6)-L-threonylcarbamoyladenosine(37) in tRNA + AMP + H(+). In terms of biological role, required for the formation of a threonylcarbamoyl group on adenosine at position 37 (t(6)A37) in tRNAs that read codons beginning with adenine. Is involved in the transfer of the threonylcarbamoyl moiety of threonylcarbamoyl-AMP (TC-AMP) to the N6 group of A37, together with TsaE and TsaB. TsaD likely plays a direct catalytic role in this reaction. This Burkholderia pseudomallei (strain 1106a) protein is tRNA N6-adenosine threonylcarbamoyltransferase.